Reading from the N-terminus, the 159-residue chain is Ribosomal RNA large subunit methyltransferase H (159 aa).

Residues leucine 76, glycine 108, and 127–132 (FGRLTL) each bind S-adenosyl-L-methionine.

This sequence belongs to the RNA methyltransferase RlmH family. Homodimer.

Its subcellular location is the cytoplasm. The enzyme catalyses pseudouridine(1915) in 23S rRNA + S-adenosyl-L-methionine = N(3)-methylpseudouridine(1915) in 23S rRNA + S-adenosyl-L-homocysteine + H(+). Functionally, specifically methylates the pseudouridine at position 1915 (m3Psi1915) in 23S rRNA. In Listeria monocytogenes serovar 1/2a (strain ATCC BAA-679 / EGD-e), this protein is Ribosomal RNA large subunit methyltransferase H.